A 95-amino-acid polypeptide reads, in one-letter code: Integration host factor subunit beta (95 aa).

The protein belongs to the bacterial histone-like protein family. As to quaternary structure, heterodimer of an alpha and a beta chain.

In terms of biological role, this protein is one of the two subunits of integration host factor, a specific DNA-binding protein that functions in genetic recombination as well as in transcriptional and translational control. The polypeptide is Integration host factor subunit beta (Shewanella amazonensis (strain ATCC BAA-1098 / SB2B)).